The primary structure comprises 454 residues: Diaminobutyrate--2-oxoglutarate aminotransferase (454 aa).

Residue lysine 287 is modified to N6-(pyridoxal phosphate)lysine.

It belongs to the class-III pyridoxal-phosphate-dependent aminotransferase family. Pyridoxal 5'-phosphate serves as cofactor.

The catalysed reaction is L-2,4-diaminobutanoate + 2-oxoglutarate = L-aspartate 4-semialdehyde + L-glutamate. The protein operates within amine and polyamine biosynthesis; 1,3-diaminopropane biosynthesis; 1,3-diaminopropane from L-aspartate 4-semialdehyde: step 1/2. The chain is Diaminobutyrate--2-oxoglutarate aminotransferase (dat) from Haemophilus influenzae (strain ATCC 51907 / DSM 11121 / KW20 / Rd).